Reading from the N-terminus, the 303-residue chain is tRNA dimethylallyltransferase (303 aa).

9–16 (GPTASGKS) contacts ATP. 11 to 16 (TASGKS) contacts substrate. The interval 34–37 (DSKQ) is interaction with substrate tRNA.

It belongs to the IPP transferase family. As to quaternary structure, monomer. It depends on Mg(2+) as a cofactor.

It catalyses the reaction adenosine(37) in tRNA + dimethylallyl diphosphate = N(6)-dimethylallyladenosine(37) in tRNA + diphosphate. In terms of biological role, catalyzes the transfer of a dimethylallyl group onto the adenine at position 37 in tRNAs that read codons beginning with uridine, leading to the formation of N6-(dimethylallyl)adenosine (i(6)A). The polypeptide is tRNA dimethylallyltransferase (Ehrlichia chaffeensis (strain ATCC CRL-10679 / Arkansas)).